Consider the following 364-residue polypeptide: Dual-specificity RNA methyltransferase RlmN (364 aa).

Glutamate 91 acts as the Proton acceptor in catalysis. The region spanning 97–333 (EDDRGTLCIS…TTTRKTRGDD (237 aa)) is the Radical SAM core domain. Cysteine 104 and cysteine 338 are joined by a disulfide. [4Fe-4S] cluster is bound by residues cysteine 111, cysteine 115, and cysteine 118. Residues 164-165 (GE), serine 196, 218-220 (SLH), and asparagine 295 each bind S-adenosyl-L-methionine. Cysteine 338 functions as the S-methylcysteine intermediate in the catalytic mechanism.

Belongs to the radical SAM superfamily. RlmN family. [4Fe-4S] cluster serves as cofactor.

It is found in the cytoplasm. It catalyses the reaction adenosine(2503) in 23S rRNA + 2 reduced [2Fe-2S]-[ferredoxin] + 2 S-adenosyl-L-methionine = 2-methyladenosine(2503) in 23S rRNA + 5'-deoxyadenosine + L-methionine + 2 oxidized [2Fe-2S]-[ferredoxin] + S-adenosyl-L-homocysteine. The enzyme catalyses adenosine(37) in tRNA + 2 reduced [2Fe-2S]-[ferredoxin] + 2 S-adenosyl-L-methionine = 2-methyladenosine(37) in tRNA + 5'-deoxyadenosine + L-methionine + 2 oxidized [2Fe-2S]-[ferredoxin] + S-adenosyl-L-homocysteine. Specifically methylates position 2 of adenine 2503 in 23S rRNA and position 2 of adenine 37 in tRNAs. m2A2503 modification seems to play a crucial role in the proofreading step occurring at the peptidyl transferase center and thus would serve to optimize ribosomal fidelity. In Dechloromonas aromatica (strain RCB), this protein is Dual-specificity RNA methyltransferase RlmN.